Consider the following 601-residue polypeptide: DNA ligase (601 aa).

Residue aspartate 258 coordinates ATP. The N6-AMP-lysine intermediate role is filled by lysine 260. 6 residues coordinate ATP: arginine 265, arginine 280, glutamate 310, phenylalanine 350, arginine 427, and lysine 433.

Belongs to the ATP-dependent DNA ligase family. As to quaternary structure, interacts with the PCNA heterotrimer, probably via subunit PCNA3. It depends on a divalent metal cation as a cofactor.

It carries out the reaction ATP + (deoxyribonucleotide)n-3'-hydroxyl + 5'-phospho-(deoxyribonucleotide)m = (deoxyribonucleotide)n+m + AMP + diphosphate.. With respect to regulation, ligase activity stimulated by PCNA heterotrimer. DNA ligase that seals nicks in double-stranded DNA during DNA replication, DNA recombination and DNA repair. Interaction with PCNA enhances ligase activity. DNA polymerase I, DNA ligase and the flap endonuclease may be constitutively associated with the PCNA heterotrimer forming a scanning complex able to couple DNA synthesis and Okazaki fragment maturation. In Saccharolobus solfataricus (strain ATCC 35092 / DSM 1617 / JCM 11322 / P2) (Sulfolobus solfataricus), this protein is DNA ligase.